We begin with the raw amino-acid sequence, 502 residues long: Glycerol kinase (502 aa).

Residue T13 participates in ADP binding. Positions 13, 14, and 15 each coordinate ATP. Sn-glycerol 3-phosphate is bound at residue T13. R17 lines the ADP pocket. Sn-glycerol 3-phosphate contacts are provided by R83, E84, Y136, and D246. Positions 83, 84, 136, 246, and 247 each coordinate glycerol. Residues T268 and G311 each coordinate ADP. Residues T268, G311, Q315, and G412 each contribute to the ATP site. Residues G412 and N416 each contribute to the ADP site.

The protein belongs to the FGGY kinase family.

The catalysed reaction is glycerol + ATP = sn-glycerol 3-phosphate + ADP + H(+). It functions in the pathway polyol metabolism; glycerol degradation via glycerol kinase pathway; sn-glycerol 3-phosphate from glycerol: step 1/1. Inhibited by fructose 1,6-bisphosphate (FBP). Functionally, key enzyme in the regulation of glycerol uptake and metabolism. Catalyzes the phosphorylation of glycerol to yield sn-glycerol 3-phosphate. In Francisella tularensis subsp. holarctica (strain FTNF002-00 / FTA), this protein is Glycerol kinase.